The primary structure comprises 183 residues: MGKYSIDPENPIKSCKARGSYLRVHFKNTRETAQAIKKMHIRKAYRYLKDVIAKKQIIPFRRFCGGVGRKAQAKAFKHTQGRWPVKSAEFLLGLLKNAESNADVKGLDVDSLVIDHIQVNRAPYMRRRTYRAHGRINPYMSSPCHIEMIVSEKEQVVPRAEEEVEVKKVSKKKLAREKLKARE.

Belongs to the universal ribosomal protein uL22 family.

The polypeptide is Large ribosomal subunit protein uL22 (RPL17) (Podocoryna carnea (Hydrozoan)).